A 255-amino-acid polypeptide reads, in one-letter code: Taurine import ATP-binding protein TauB (255 aa).

One can recognise an ABC transporter domain in the interval 2 to 229 (LQISHLYADY…RFVAGESSRS (228 aa)). 34 to 41 (GPSGCGKT) contributes to the ATP binding site.

It belongs to the ABC transporter superfamily. Taurine importer (TC 3.A.1.17.1) family. As to quaternary structure, the complex is composed of two ATP-binding proteins (TauB), two transmembrane proteins (TauC) and a solute-binding protein (TauA).

The protein resides in the cell inner membrane. It catalyses the reaction taurine(out) + ATP + H2O = taurine(in) + ADP + phosphate + H(+). Part of the ABC transporter complex TauABC involved in taurine import. Responsible for energy coupling to the transport system. In Escherichia coli O6:K15:H31 (strain 536 / UPEC), this protein is Taurine import ATP-binding protein TauB.